Reading from the N-terminus, the 83-residue chain is RNA-binding protein Hfq (83 aa).

The Sm domain maps to 9-69 (DQLLNTARKE…ISTIIPAKPI (61 aa)).

This sequence belongs to the Hfq family. In terms of assembly, homohexamer.

RNA chaperone that binds small regulatory RNA (sRNAs) and mRNAs to facilitate mRNA translational regulation in response to envelope stress, environmental stress and changes in metabolite concentrations. Also binds with high specificity to tRNAs. This chain is RNA-binding protein Hfq, found in Leptospira biflexa serovar Patoc (strain Patoc 1 / Ames).